The sequence spans 206 residues: Bis(5'-adenosyl)-triphosphatase (206 aa).

One can recognise an HIT domain in the interval 3–115 (KPIYFSKFLV…KINNVGDLIY (113 aa)). Residues 96–100 (HLHTH) carry the Histidine triad motif motif. Histidine 98 acts as the Tele-AMP-histidine intermediate in catalysis. A disordered region spans residues 143-164 (RQARKNNSTSATVDGDELSQGP).

Homodimer. The cofactor is Mn(2+).

It localises to the cytoplasm. The protein resides in the nucleus. Its subcellular location is the mitochondrion. The enzyme catalyses P(1),P(3)-bis(5'-adenosyl) triphosphate + H2O = AMP + ADP + 2 H(+). Cleaves A-5'-PPP-5'A to yield AMP and ADP. Can cleave all dinucleoside polyphosphates, provided the phosphate chain contains at least 3 phosphates and that 1 of the 2 bases composing the nucleotide is a purine. Is most effective on dinucleoside triphosphates. Negatively regulates intracellular dinucleoside polyphosphate levels, which elevate following heat shock. The polypeptide is Bis(5'-adenosyl)-triphosphatase (HNT2) (Saccharomyces cerevisiae (strain RM11-1a) (Baker's yeast)).